We begin with the raw amino-acid sequence, 202 residues long: Orotate phosphoribosyltransferase (202 aa).

113–121 (EDIITTGGS) provides a ligand contact to 5-phospho-alpha-D-ribose 1-diphosphate. Orotate is bound by residues threonine 117 and arginine 145.

It belongs to the purine/pyrimidine phosphoribosyltransferase family. PyrE subfamily. In terms of assembly, homodimer. It depends on Mg(2+) as a cofactor.

The enzyme catalyses orotidine 5'-phosphate + diphosphate = orotate + 5-phospho-alpha-D-ribose 1-diphosphate. It participates in pyrimidine metabolism; UMP biosynthesis via de novo pathway; UMP from orotate: step 1/2. Its function is as follows. Catalyzes the transfer of a ribosyl phosphate group from 5-phosphoribose 1-diphosphate to orotate, leading to the formation of orotidine monophosphate (OMP). The protein is Orotate phosphoribosyltransferase of Sulfurimonas denitrificans (strain ATCC 33889 / DSM 1251) (Thiomicrospira denitrificans (strain ATCC 33889 / DSM 1251)).